The sequence spans 556 residues: Copine-7 (556 aa).

2 consecutive C2 domains span residues M1–L128 and N135–D262. Residues D168, D174, D230, D232, and D238 each coordinate Ca(2+). In terms of domain architecture, VWFA spans H305–V504. The interval K536–P556 is disordered.

Belongs to the copine family. Requires Ca(2+) as cofactor.

It is found in the cytoplasm. The protein localises to the nucleus. The protein resides in the cell membrane. Functionally, calcium-dependent phospholipid-binding protein that may play a role in calcium-mediated intracellular processes. In Rattus norvegicus (Rat), this protein is Copine-7.